The following is a 381-amino-acid chain: Creatine kinase B-type (381 aa).

Ser4 bears the Phosphoserine mark. Residues 11–98 form the Phosphagen kinase N-terminal domain; sequence KLRFPAEDEF…FDPIIEDRHG (88 aa). Thr35 is modified (phosphothreonine). Lys45 participates in a covalent cross-link: Glycyl lysine isopeptide (Lys-Gly) (interchain with G-Cter in ubiquitin). Val72 provides a ligand contact to creatine. Residues 96 to 110 are compositionally biased toward basic and acidic residues; that stretch reads RHGGYQPSDEHKTDL. A disordered region spans residues 96–122; it reads RHGGYQPSDEHKTDLNPDNLQGGDDLD. Residue Lys107 forms a Glycyl lysine isopeptide (Lys-Gly) (interchain with G-Cter in ubiquitin) linkage. Position 125 is a phosphotyrosine (Tyr125). One can recognise a Phosphagen kinase C-terminal domain in the interval 125–367; the sequence is YVLSSRVRTG…KLLIEMEQRL (243 aa). Residues 128–132, Arg130, Arg132, and His191 each bind ATP; that span reads SSRVR. Residues 130-138 form an internal MTS-like signal region; it reads RVRTGRSIR. Ser199 carries the phosphoserine modification. Glu232 serves as a coordination point for creatine. Arg236 is an ATP binding site. 3'-nitrotyrosine is present on Tyr269. Residue Ser285 coordinates creatine. Position 292 (Arg292) interacts with ATP. Position 309 is a phosphoserine (Ser309). ATP is bound by residues Arg320, 320–325, and Asp335; that span reads RGTGGV. Phosphothreonine is present on Thr322. Residue Lys381 forms a Glycyl lysine isopeptide (Lys-Gly) (interchain with G-Cter in ubiquitin) linkage.

This sequence belongs to the ATP:guanido phosphotransferase family. Dimer of identical or non-identical chains, which can be either B (brain type) or M (muscle type). With MM being the major form in skeletal muscle and myocardium, MB existing in myocardium, and BB existing in many tissues, especially brain. Interacts with SLC12A6 (via C-terminus); the interaction may be required for SLC12A6 potassium-chloride cotransport activity. In terms of processing, ubiquitinated by the ECS(ASB9) complex, leading to its degradation by the proteasome. In the kidney localized primarily in the outer medulla in the thick ascending limb and distal convoluted tubule.

It localises to the cytoplasm. It is found in the cytosol. The protein localises to the mitochondrion. Its subcellular location is the cell membrane. It catalyses the reaction creatine + ATP = N-phosphocreatine + ADP + H(+). Reversibly catalyzes the transfer of phosphate between ATP and various phosphogens (e.g. creatine phosphate). Creatine kinase isoenzymes play a central role in energy transduction in tissues with large, fluctuating energy demands, such as skeletal muscle, heart, brain and spermatozoa. Acts as a key regulator of adaptive thermogenesis as part of the futile creatine cycle: localizes to the mitochondria of thermogenic fat cells and acts by mediating phosphorylation of creatine to initiate a futile cycle of creatine phosphorylation and dephosphorylation. During the futile creatine cycle, creatine and N-phosphocreatine are in a futile cycle, which dissipates the high energy charge of N-phosphocreatine as heat without performing any mechanical or chemical work. The protein is Creatine kinase B-type (Ckb) of Rattus norvegicus (Rat).